Here is a 182-residue protein sequence, read N- to C-terminus: Ribosomal RNA small subunit methyltransferase G (182 aa).

Residues Gly58, Phe63, 109–110 (IE), and Arg123 contribute to the S-adenosyl-L-methionine site.

The protein belongs to the methyltransferase superfamily. RNA methyltransferase RsmG family.

Its subcellular location is the cytoplasm. It catalyses the reaction guanosine(527) in 16S rRNA + S-adenosyl-L-methionine = N(7)-methylguanosine(527) in 16S rRNA + S-adenosyl-L-homocysteine. Functionally, specifically methylates the N7 position of guanine in position 527 of 16S rRNA. The protein is Ribosomal RNA small subunit methyltransferase G of Campylobacter fetus subsp. fetus (strain 82-40).